Reading from the N-terminus, the 236-residue chain is Eukaryotic translation initiation factor 3 subunit J (236 aa).

The interval 20–88 (ANNINKWEGE…AEEEKRLANL (69 aa)) is disordered. A compositionally biased stretch (acidic residues) spans 28 to 46 (GEDDDEDVKESWEDEEEKK). Basic and acidic residues-rich tracts occupy residues 47–58 (DEEKPTKTEVPV) and 68–88 (AKLE…LANL).

The protein belongs to the eIF-3 subunit J family. As to quaternary structure, component of the eukaryotic translation initiation factor 3 (eIF-3) complex. The eIF-3 complex interacts with pix.

The protein resides in the cytoplasm. Functionally, component of the eukaryotic translation initiation factor 3 (eIF-3) complex, which is involved in protein synthesis of a specialized repertoire of mRNAs and, together with other initiation factors, stimulates binding of mRNA and methionyl-tRNAi to the 40S ribosome. The eIF-3 complex specifically targets and initiates translation of a subset of mRNAs involved in cell proliferation. The chain is Eukaryotic translation initiation factor 3 subunit J from Drosophila willistoni (Fruit fly).